The primary structure comprises 386 residues: D-galactosamine-6-phosphate deaminase AgaS (386 aa).

SIS domains follow at residues 59–217 (LTPI…CIEM) and 222–366 (LTER…PDNP).

The protein belongs to the SIS family. AgaS subfamily.

The protein resides in the cytoplasm. The enzyme catalyses D-galactosamine 6-phosphate + H2O = D-tagatopyranose 1-phosphate + NH4(+). It catalyses the reaction alpha-D-glucosamine 6-phosphate + H2O = beta-D-fructose 6-phosphate + NH4(+). Its function is as follows. Involved in the pathway of N-acetyl-D-galactosamine degradation. Catalyzes the conversion of D-galactosamine 6-phosphate (GalN-6-P) to D-tagatofuranose 6-phosphate (Tag-6-P). It can also catalyze the conversion of D-glucosamine 6-phosphate. The chain is D-galactosamine-6-phosphate deaminase AgaS from Shewanella sp. (strain ANA-3).